The sequence spans 522 residues: DNA-binding protein Ikaros (522 aa).

Disordered regions lie at residues 1 to 48 and 96 to 115; these read MEME…HNNR and AKVNGSHAGGPDSKGPYSSA. 4 C2H2-type zinc fingers span residues 125-147, 153-175, 181-203, and 209-232; these read LKCDICGIVCIGPNVLMVHKRSH, FQCTQCGASFTQKGNLLRHIKLH, FKCHLCNYACRRRDALSGHLRTH, and HKCAYCGRSYKQRSSLEEHKERCH. Residues 379–406 are disordered; it reads KSASSEKDGSPSHSGQDSTDTESNNEEK. 2 C2H2-type zinc fingers span residues 468–490 and 496–520; these read YRCEHCRILFLDHVMYTIHMGCH and FECNLCGHRSQDRYEFSSHMTRGEH.

Belongs to the Ikaros C2H2-type zinc-finger protein family. As to expression, expression mainly limited to thymus, spleen and pronephros. Very low expression in liver. No expression in testis, brain, eye and muscle.

The protein resides in the nucleus. Binds and activates the enhancer (delta-A element) of the CD3-delta gene. Functions in the specification and the maturation of the T-lymphocyte. Also interacts with a critical control element in the TDT (terminal deoxynucleotidyltransferase) promoter as well as with the promoters for other genes expressed during early stages of B- and T-cell development. Function is isoform-specific and is modulated by dominant-negative inactive isoforms. The protein is DNA-binding protein Ikaros (ikzf1) of Oncorhynchus mykiss (Rainbow trout).